Consider the following 395-residue polypeptide: S-adenosylmethionine synthase (395 aa).

Position 14 (H14) interacts with ATP. Position 16 (D16) interacts with Mg(2+). Position 42 (E42) interacts with K(+). 2 residues coordinate L-methionine: E55 and Q98. The interval 98 to 108 (QSPDIAMGVNK) is flexible loop. ATP contacts are provided by residues 174 to 176 (DGK), 240 to 241 (RF), D249, 255 to 256 (RK), A272, and K276. Residue D249 participates in L-methionine binding. K280 contributes to the L-methionine binding site.

The protein belongs to the AdoMet synthase family. Homotetramer; dimer of dimers. Mg(2+) serves as cofactor. It depends on K(+) as a cofactor.

It is found in the cytoplasm. It carries out the reaction L-methionine + ATP + H2O = S-adenosyl-L-methionine + phosphate + diphosphate. The protein operates within amino-acid biosynthesis; S-adenosyl-L-methionine biosynthesis; S-adenosyl-L-methionine from L-methionine: step 1/1. Catalyzes the formation of S-adenosylmethionine (AdoMet) from methionine and ATP. The overall synthetic reaction is composed of two sequential steps, AdoMet formation and the subsequent tripolyphosphate hydrolysis which occurs prior to release of AdoMet from the enzyme. In Caldanaerobacter subterraneus subsp. tengcongensis (strain DSM 15242 / JCM 11007 / NBRC 100824 / MB4) (Thermoanaerobacter tengcongensis), this protein is S-adenosylmethionine synthase.